The following is a 330-amino-acid chain: Pyridoxal 5'-phosphate synthase subunit PdxS (330 aa).

Residue aspartate 23 coordinates D-ribose 5-phosphate. The Schiff-base intermediate with D-ribose 5-phosphate role is filled by lysine 80. Glycine 152 lines the D-ribose 5-phosphate pocket. Arginine 164 contributes to the D-glyceraldehyde 3-phosphate binding site. D-ribose 5-phosphate contacts are provided by residues glycine 250 and 271–272 (GS).

It belongs to the PdxS/SNZ family. As to quaternary structure, in the presence of PdxT, forms a dodecamer of heterodimers.

It carries out the reaction aldehydo-D-ribose 5-phosphate + D-glyceraldehyde 3-phosphate + L-glutamine = pyridoxal 5'-phosphate + L-glutamate + phosphate + 3 H2O + H(+). It participates in cofactor biosynthesis; pyridoxal 5'-phosphate biosynthesis. Catalyzes the formation of pyridoxal 5'-phosphate from ribose 5-phosphate (RBP), glyceraldehyde 3-phosphate (G3P) and ammonia. The ammonia is provided by the PdxT subunit. Can also use ribulose 5-phosphate and dihydroxyacetone phosphate as substrates, resulting from enzyme-catalyzed isomerization of RBP and G3P, respectively. This Methanocaldococcus jannaschii (strain ATCC 43067 / DSM 2661 / JAL-1 / JCM 10045 / NBRC 100440) (Methanococcus jannaschii) protein is Pyridoxal 5'-phosphate synthase subunit PdxS.